Here is a 36-residue protein sequence, read N- to C-terminus: Photosystem I reaction center subunit VIII (36 aa).

Residues 9–29 (ILVPLVGLIFPAFSMALFFLY) form a helical membrane-spanning segment.

The protein belongs to the PsaI family.

Its subcellular location is the plastid. It is found in the chloroplast thylakoid membrane. In terms of biological role, may help in the organization of the PsaL subunit. In Thalassiosira pseudonana (Marine diatom), this protein is Photosystem I reaction center subunit VIII.